We begin with the raw amino-acid sequence, 413 residues long: Arginine biosynthesis bifunctional protein ArgJ (413 aa).

6 residues coordinate substrate: threonine 160, lysine 186, threonine 197, glutamate 284, asparagine 408, and serine 413. Threonine 197 functions as the Nucleophile in the catalytic mechanism.

It belongs to the ArgJ family. In terms of assembly, heterotetramer of two alpha and two beta chains.

The protein resides in the cytoplasm. The catalysed reaction is N(2)-acetyl-L-ornithine + L-glutamate = N-acetyl-L-glutamate + L-ornithine. It carries out the reaction L-glutamate + acetyl-CoA = N-acetyl-L-glutamate + CoA + H(+). It functions in the pathway amino-acid biosynthesis; L-arginine biosynthesis; L-ornithine and N-acetyl-L-glutamate from L-glutamate and N(2)-acetyl-L-ornithine (cyclic): step 1/1. Its pathway is amino-acid biosynthesis; L-arginine biosynthesis; N(2)-acetyl-L-ornithine from L-glutamate: step 1/4. Catalyzes two activities which are involved in the cyclic version of arginine biosynthesis: the synthesis of N-acetylglutamate from glutamate and acetyl-CoA as the acetyl donor, and of ornithine by transacetylation between N(2)-acetylornithine and glutamate. The sequence is that of Arginine biosynthesis bifunctional protein ArgJ from Burkholderia mallei (strain ATCC 23344).